The chain runs to 359 residues: Type-1 angiotensin II receptor (359 aa).

The Extracellular segment spans residues M1–S25. N4 is a glycosylation site (N-linked (GlcNAc...) asparagine). 2 residues coordinate angiotensin II: Q15 and D17. 2 disulfide bridges follow: C18/C274 and C101/C180. A helical membrane pass occupies residues Y26–F55. The Cytoplasmic portion of the chain corresponds to Y56–T61. Residues V62 to A89 form a helical membrane-spanning segment. Topologically, residues M90–N98 are extracellular. The chain crosses the membrane as a helical span at residues Y99–D125. Residues R126–T141 are Cytoplasmic-facing. Residues M142 to I165 form a helical membrane-spanning segment. At H166–T190 the chain is on the extracellular side. Position 167 (R167) interacts with angiotensin II. N176 carries an N-linked (GlcNAc...) asparagine glycan. Positions 182, 183, and 184 each coordinate angiotensin II. N188 carries an N-linked (GlcNAc...) asparagine glycan. A helical transmembrane segment spans residues L191–T216. Residue K199 participates in angiotensin II binding. Residues L217–F239 are Cytoplasmic-facing. Residues K240–L268 form a helical membrane-spanning segment. Residues G269–D278 lie on the Extracellular side of the membrane. Residues I279–F304 traverse the membrane as a helical segment. Topologically, residues L305 to E359 are cytoplasmic. The span at L337 to A349 shows a compositional bias: polar residues. A disordered region spans residues L337–E359. C355 carries S-palmitoyl cysteine lipidation.

Belongs to the G-protein coupled receptor 1 family. As to quaternary structure, interacts with MAS1. Interacts with ARRB1. Interacts with FLNA (via filamin repeat 21); increases PKA-mediated phosphorylation of FLNA. C-terminal Ser or Thr residues may be phosphorylated. Expressed in liver, kidney, adrenal gland, heart and colon.

Its subcellular location is the cell membrane. Functionally, receptor for angiotensin II, a vasoconstricting peptide, which acts as a key regulator of blood pressure and sodium retention by the kidney. The activated receptor in turn couples to G-alpha proteins G(q) (GNAQ, GNA11, GNA14 or GNA15) and thus activates phospholipase C and increases the cytosolic Ca(2+) concentrations, which in turn triggers cellular responses such as stimulation of protein kinase C. The sequence is that of Type-1 angiotensin II receptor (AGTR1) from Cavia porcellus (Guinea pig).